The sequence spans 814 residues: Echinoderm microtubule-associated protein-like 1 (814 aa).

Residues 31–72 (SMEISDRIASLEQRVQMQEDDIQLLKSALADVVRRLNITEEQ) adopt a coiled-coil conformation. The disordered stretch occupies residues 77-185 (NRKGPTKARP…EPTFSPEEGY (109 aa)). Polar residues predominate over residues 92–101 (PLRTTVNNGT). Residues 103 to 115 (LPKKPSASLPSPS) are compositionally biased toward low complexity. Residue serine 113 is modified to Phosphoserine. The span at 127-137 (KSINRTSSSER) shows a compositional bias: polar residues. A compositionally biased stretch (basic and acidic residues) spans 142 to 152 (GRRESSGDSKG). A compositionally biased stretch (low complexity) spans 155 to 167 (NRTGSTSSSSSGK). The segment at 175-814 (KEPTFSPEEG…DTSIMQWRVI (640 aa)) is tandem atypical propeller in EMLs. WD repeat units follow at residues 260-309 (EQLQ…IWDS), 314-357 (TLHV…VWDW), 362-399 (RLAD…FWTL), 408-445 (QGLF…VWGK), 449-488 (RISY…SWNG), 492-529 (KLHK…LQGT), 534-571 (FTPI…LWDA), 577-612 (VWDK…VFDT), 616-654 (DLVT…IYGV), 663-700 (RVGK…YWVP), 708-767 (SVET…LFSY), and 774-813 (APSH…QWRV).

It belongs to the WD repeat EMAP family. In terms of assembly, homotrimer; self-association is mediated by the N-terminal coiled coil. Does not interact with EML3. Binds repolymerizing microtubules. Binds unpolymerized tubulins via its WD repeat region. Interacts with TASOR.

The protein localises to the cytoplasm. It is found in the perinuclear region. The protein resides in the cytoskeleton. Functionally, modulates the assembly and organization of the microtubule cytoskeleton, and probably plays a role in regulating the orientation of the mitotic spindle and the orientation of the plane of cell division. Required for normal proliferation of neuronal progenitor cells in the developing brain and for normal brain development. Does not affect neuron migration per se. The protein is Echinoderm microtubule-associated protein-like 1 (Eml1) of Rattus norvegicus (Rat).